A 91-amino-acid polypeptide reads, in one-letter code: Uteroglobin (91 aa).

An N-terminal signal peptide occupies residues 1–21; sequence MKLTITLALVTLALLCSPASA.

This sequence belongs to the secretoglobin family. In terms of assembly, antiparallel homodimer; disulfide-linked. Interaction with LMBR1L is controversial.

The protein resides in the secreted. In terms of biological role, uteroglobin binds progesterone specifically and with high affinity. It may regulate progesterone concentrations reaching the blastocyst. It is also a potent inhibitor of phospholipase A2. The protein is Uteroglobin (SCGB1A1) of Lepus capensis (Brown hare).